We begin with the raw amino-acid sequence, 153 residues long: 3-hydroxyacyl-[acyl-carrier-protein] dehydratase FabZ (153 aa).

The active site involves H47.

The protein belongs to the thioester dehydratase family. FabZ subfamily.

It localises to the cytoplasm. It catalyses the reaction a (3R)-hydroxyacyl-[ACP] = a (2E)-enoyl-[ACP] + H2O. Functionally, involved in unsaturated fatty acids biosynthesis. Catalyzes the dehydration of short chain beta-hydroxyacyl-ACPs and long chain saturated and unsaturated beta-hydroxyacyl-ACPs. The sequence is that of 3-hydroxyacyl-[acyl-carrier-protein] dehydratase FabZ from Myxococcus xanthus (strain DK1622).